Reading from the N-terminus, the 578-residue chain is MAEESRKPSAPSPPDQTPEEDLVIVKVEEDHGWDQESSLHESNPLGQEVFRLRFRQLRYQETLGPREALIQLRALCHQWLRPDLNTKEQILELLVLEQFLTILPEELQTLVKEHQLENGEEVVTLLEDLERQIDILGRPVSARVHGHRVLWEEVVHSASAPEPPNTQLQSEATQHKSPVPQESQERAMSTSQSPTRSQKGSSGDQEMTATLLTAGFQTLEKIEDMAVSLIREEWLLDPSQKDLCRDNRPENFRNMFSLGGETRSENRELASKQVISTGIQPHGETAAKCNGDVIRGLEHEEARDLLGRLERQRGNPTQERRHKCDECGKSFAQSSGLVRHWRIHTGEKPYQCNVCGKAFSYRSALLSHQDIHNKVKRYHCKECGKAFSQNTGLILHQRIHTGEKPYQCNQCGKAFSQSAGLILHQRIHSGERPYECNECGKAFSHSSHLIGHQRIHTGEKPYECDECGKTFRRSSHLIGHQRSHTGEKPYKCNECGRAFSQKSGLIEHQRIHTGERPYKCKECGKAFNGNTGLIQHLRIHTGEKPYQCNECGKAFIQRSSLIRHQRIHSGEKSESISV.

A disordered region spans residues 1 to 20 (MAEESRKPSAPSPPDQTPEE). Residue Ser12 is modified to Phosphoserine. Lys26 participates in a covalent cross-link: Glycyl lysine isopeptide (Lys-Gly) (interchain with G-Cter in SUMO2). An SCAN box domain is found at 51-133 (RLRFRQLRYQ…TLLEDLERQI (83 aa)). The interval 158-205 (ASAPEPPNTQLQSEATQHKSPVPQESQERAMSTSQSPTRSQKGSSGDQ) is disordered. Residues 165 to 205 (NTQLQSEATQHKSPVPQESQERAMSTSQSPTRSQKGSSGDQ) show a composition bias toward polar residues. Glycyl lysine isopeptide (Lys-Gly) (interchain with G-Cter in SUMO2) cross-links involve residues Lys176 and Lys199. A Phosphoserine modification is found at Ser201. A KRAB domain is found at 220-316 (EKIEDMAVSL…GRLERQRGNP (97 aa)). Glycyl lysine isopeptide (Lys-Gly) (interchain with G-Cter in SUMO2) cross-links involve residues Lys221, Lys272, and Lys288. 2 C2H2-type zinc fingers span residues 322–344 (HKCD…WRIH) and 350–372 (YQCN…QDIH). Residues Lys374 and Lys376 each participate in a glycyl lysine isopeptide (Lys-Gly) (interchain with G-Cter in SUMO2) cross-link. 7 C2H2-type zinc fingers span residues 378–400 (YHCK…QRIH), 406–428 (YQCN…QRIH), 434–456 (YECN…QRIH), 462–484 (YECD…QRSH), 490–512 (YKCN…QRIH), 518–540 (YKCK…LRIH), and 546–568 (YQCN…QRIH). Residues Lys413 and Lys441 each participate in a glycyl lysine isopeptide (Lys-Gly) (interchain with G-Cter in SUMO2) cross-link. A Glycyl lysine isopeptide (Lys-Gly) (interchain with G-Cter in SUMO2) cross-link involves residue Lys502. Lys572 is covalently cross-linked (Glycyl lysine isopeptide (Lys-Gly) (interchain with G-Cter in SUMO2)).

The protein belongs to the krueppel C2H2-type zinc-finger protein family.

Its subcellular location is the nucleus. Its function is as follows. May be involved in transcriptional regulation. The sequence is that of Zinc finger protein with KRAB and SCAN domains 8 (ZKSCAN8) from Homo sapiens (Human).